The primary structure comprises 84 residues: uncharacterized protein (84 aa).

This is an uncharacterized protein from Rickettsia prowazekii (strain Madrid E).